A 552-amino-acid chain; its full sequence is Ribulokinase (552 aa).

The protein belongs to the ribulokinase family.

The enzyme catalyses D-ribulose + ATP = D-ribulose 5-phosphate + ADP + H(+). It catalyses the reaction L-ribulose + ATP = L-ribulose 5-phosphate + ADP + H(+). Its pathway is carbohydrate degradation; L-arabinose degradation via L-ribulose; D-xylulose 5-phosphate from L-arabinose (bacterial route): step 2/3. This chain is Ribulokinase, found in Bacillus licheniformis (strain ATCC 14580 / DSM 13 / JCM 2505 / CCUG 7422 / NBRC 12200 / NCIMB 9375 / NCTC 10341 / NRRL NRS-1264 / Gibson 46).